Here is a 181-residue protein sequence, read N- to C-terminus: Putative ankyrin repeat protein RBE_0150 (181 aa).

ANK repeat units lie at residues 50–79, 83–114, 118–147, and 151–180; these read IGQK…KLGT, LGRT…DINA, SGST…DYFT, and LGQT…AGYY.

The chain is Putative ankyrin repeat protein RBE_0150 from Rickettsia bellii (strain RML369-C).